Reading from the N-terminus, the 317-residue chain is ATP synthase gamma chain (317 aa).

This sequence belongs to the ATPase gamma chain family. As to quaternary structure, F-type ATPases have 2 components, CF(1) - the catalytic core - and CF(0) - the membrane proton channel. CF(1) has five subunits: alpha(3), beta(3), gamma(1), delta(1), epsilon(1). CF(0) has three main subunits: a, b and c.

Its subcellular location is the cellular thylakoid membrane. Its function is as follows. Produces ATP from ADP in the presence of a proton gradient across the membrane. The gamma chain is believed to be important in regulating ATPase activity and the flow of protons through the CF(0) complex. The sequence is that of ATP synthase gamma chain from Synechococcus sp. (strain CC9902).